The following is a 331-amino-acid chain: CRISPR-associated endonuclease Cas1 (331 aa).

3 residues coordinate Mn(2+): Glu-155, His-221, and Glu-236.

The protein belongs to the CRISPR-associated endonuclease Cas1 family. In terms of assembly, homodimer, forms a heterotetramer with a Cas2 homodimer. The cofactor is Mg(2+). It depends on Mn(2+) as a cofactor.

CRISPR (clustered regularly interspaced short palindromic repeat), is an adaptive immune system that provides protection against mobile genetic elements (viruses, transposable elements and conjugative plasmids). CRISPR clusters contain spacers, sequences complementary to antecedent mobile elements, and target invading nucleic acids. CRISPR clusters are transcribed and processed into CRISPR RNA (crRNA). Acts as a dsDNA endonuclease. Involved in the integration of spacer DNA into the CRISPR cassette. This Methanopyrus kandleri (strain AV19 / DSM 6324 / JCM 9639 / NBRC 100938) protein is CRISPR-associated endonuclease Cas1.